The sequence spans 135 residues: Protein PilG (135 aa).

The 117-residue stretch at 9-125 (KVMVIDDSKT…ELLGAIKAHV (117 aa)) folds into the Response regulatory domain. D58 bears the 4-aspartylphosphate mark.

Post-translationally, phosphorylated.

Functionally, plays an essential role in both cAMP-dependent and independent regulation of twitching motility. Regulates the cAMP-independent coordination of type IV pilus (T4P) biogenesis and retraction that plays a role in surface and host cell adhesion, colonization, biofilm maturation, virulence, and twitching. In addition, phosphorylated PilG is necessary for cAMP production via regulation of the adenylate cyclase CyaB. Acts therefore as a response regulator of the chemosensory system/Chp system. The chain is Protein PilG (pilG) from Pseudomonas aeruginosa (strain ATCC 15692 / DSM 22644 / CIP 104116 / JCM 14847 / LMG 12228 / 1C / PRS 101 / PAO1).